Consider the following 552-residue polypeptide: Indole-3-pyruvate decarboxylase (552 aa).

Glutamate 52 provides a ligand contact to thiamine diphosphate. The interval 385-466 is thiamine pyrophosphate binding; sequence TSAFGAIDLR…ILVLNNEGYT (82 aa). The Mg(2+) site is built by aspartate 435 and asparagine 462.

The protein belongs to the TPP enzyme family. Homotetramer. A metal cation serves as cofactor. Thiamine diphosphate is required as a cofactor.

It catalyses the reaction indole-3-pyruvate + H(+) = indole-3-acetaldehyde + CO2. It participates in plant hormone metabolism; auxin biosynthesis. The sequence is that of Indole-3-pyruvate decarboxylase (ipdC) from Enterobacter cloacae.